The following is a 521-amino-acid chain: ATP synthase subunit beta (521 aa).

Composition is skewed to low complexity over residues 1-21 (MAKA…AAKA) and 28-42 (PKTT…TKSG). Positions 1-42 (MAKAATPKTTAAAEAKPAAKAPAKKAAPKTTAAAKPAATKSG) are disordered. 199-206 (GGAGVGKT) lines the ATP pocket.

It belongs to the ATPase alpha/beta chains family. F-type ATPases have 2 components, CF(1) - the catalytic core - and CF(0) - the membrane proton channel. CF(1) has five subunits: alpha(3), beta(3), gamma(1), delta(1), epsilon(1). CF(0) has three main subunits: a(1), b(2) and c(9-12). The alpha and beta chains form an alternating ring which encloses part of the gamma chain. CF(1) is attached to CF(0) by a central stalk formed by the gamma and epsilon chains, while a peripheral stalk is formed by the delta and b chains.

It is found in the cell inner membrane. It catalyses the reaction ATP + H2O + 4 H(+)(in) = ADP + phosphate + 5 H(+)(out). Its function is as follows. Produces ATP from ADP in the presence of a proton gradient across the membrane. The catalytic sites are hosted primarily by the beta subunits. The chain is ATP synthase subunit beta from Brucella canis (strain ATCC 23365 / NCTC 10854 / RM-666).